Reading from the N-terminus, the 93-residue chain is Em protein H5 (93 aa).

The tract at residues 1-93 (MASGQQERSE…IDESKFKTKS (93 aa)) is disordered. 3 stretches are compositionally biased toward basic and acidic residues: residues 7–19 (ERSELDRMAREGE), 32–62 (EAQEHLADGRSRGGETRKEQLGEEGYREMGR), and 73–93 (GGERAAREGIEIDESKFKTKS).

It belongs to the small hydrophilic plant seed protein family.

Its function is as follows. It is thought to provide protection for the cytoplasm during the desiccation stage of embryo development. This Triticum aestivum (Wheat) protein is Em protein H5 (EMH5).